The sequence spans 148 residues: Cystatin-C (148 aa).

The signal sequence occupies residues 1–28 (MARSLGVPLLLLAALVVALALAVSPAAG). A Secondary area of contact motif is present at residues 83 to 87 (QIVSG). 2 disulfides stabilise this stretch: Cys101/Cys111 and Cys125/Cys145.

It belongs to the cystatin family.

It is found in the secreted. Its function is as follows. This is a thiol proteinase inhibitor. In Oryctolagus cuniculus (Rabbit), this protein is Cystatin-C (CST3).